We begin with the raw amino-acid sequence, 490 residues long: Betaine aldehyde dehydrogenase (490 aa).

K(+) is bound by residues Ile27 and Asp93. 150–152 (GAW) contacts NAD(+). The Charge relay system role is filled by Lys162. 176-179 (KPSE) provides a ligand contact to NAD(+). Val180 contacts K(+). 230–233 (GTDT) is an NAD(+) binding site. Leu246 provides a ligand contact to K(+). The Proton acceptor role is filled by Glu252. Gly254, Cys286, and Glu387 together coordinate NAD(+). Catalysis depends on Cys286, which acts as the Nucleophile. Cysteine sulfenic acid (-SOH) is present on Cys286. Lys457 and Gly460 together coordinate K(+). Residue Glu464 is the Charge relay system of the active site.

Belongs to the aldehyde dehydrogenase family. As to quaternary structure, dimer of dimers. K(+) is required as a cofactor.

It carries out the reaction betaine aldehyde + NAD(+) + H2O = glycine betaine + NADH + 2 H(+). It participates in amine and polyamine biosynthesis; betaine biosynthesis via choline pathway; betaine from betaine aldehyde: step 1/1. Functionally, involved in the biosynthesis of the osmoprotectant glycine betaine. Catalyzes the irreversible oxidation of betaine aldehyde to the corresponding acid. The sequence is that of Betaine aldehyde dehydrogenase from Pseudomonas fluorescens (strain Pf0-1).